Consider the following 203-residue polypeptide: Transmembrane emp24 domain-containing protein (203 aa).

The first 22 residues, 1–22, serve as a signal peptide directing secretion; that stretch reads MASIRLLPSCIVLMFLARSSLC. Residues 23-170 lie on the Lumenal side of the membrane; the sequence is YFITIDAHGE…RSINDNTNSR (148 aa). A GOLD domain is found at 32 to 114; it reads EECFHDKVTS…PKVLKFSMDI (83 aa). The helical transmembrane segment at 171-191 threads the bilayer; sequence VVWWSFFESLVLVAMTLGQVY. Residues 192–203 lie on the Cytoplasmic side of the membrane; the sequence is YLKRFFEVRRVV.

The protein belongs to the EMP24/GP25L family.

Its subcellular location is the cytoplasmic vesicle membrane. Could have a role in the budding of coatomer-coated and other species of coated vesicles. The chain is Transmembrane emp24 domain-containing protein from Nematostella vectensis (Starlet sea anemone).